A 274-amino-acid polypeptide reads, in one-letter code: Diaminopimelate epimerase (274 aa).

Positions 11, 44, and 64 each coordinate substrate. The active-site Proton donor is Cys73. Substrate contacts are provided by residues 74–75 (GN), Asn157, Asn190, and 208–209 (ER). Cys217 acts as the Proton acceptor in catalysis. 218–219 (GS) contributes to the substrate binding site.

This sequence belongs to the diaminopimelate epimerase family. As to quaternary structure, homodimer.

Its subcellular location is the cytoplasm. The enzyme catalyses (2S,6S)-2,6-diaminopimelate = meso-2,6-diaminopimelate. It participates in amino-acid biosynthesis; L-lysine biosynthesis via DAP pathway; DL-2,6-diaminopimelate from LL-2,6-diaminopimelate: step 1/1. Its function is as follows. Catalyzes the stereoinversion of LL-2,6-diaminopimelate (L,L-DAP) to meso-diaminopimelate (meso-DAP), a precursor of L-lysine and an essential component of the bacterial peptidoglycan. This Proteus mirabilis (strain HI4320) protein is Diaminopimelate epimerase.